Here is a 431-residue protein sequence, read N- to C-terminus: 5-methylthioadenosine/S-adenosylhomocysteine deaminase (431 aa).

Zn(2+) contacts are provided by H60 and H62. Positions 89 and 182 each coordinate substrate. H209 contacts Zn(2+). E212 and D297 together coordinate substrate. Zn(2+) is bound at residue D297.

Belongs to the metallo-dependent hydrolases superfamily. MTA/SAH deaminase family. Zn(2+) is required as a cofactor.

It catalyses the reaction S-adenosyl-L-homocysteine + H2O + H(+) = S-inosyl-L-homocysteine + NH4(+). The catalysed reaction is S-methyl-5'-thioadenosine + H2O + H(+) = S-methyl-5'-thioinosine + NH4(+). Functionally, catalyzes the deamination of 5-methylthioadenosine and S-adenosyl-L-homocysteine into 5-methylthioinosine and S-inosyl-L-homocysteine, respectively. Is also able to deaminate adenosine. The protein is 5-methylthioadenosine/S-adenosylhomocysteine deaminase of Natronomonas pharaonis (strain ATCC 35678 / DSM 2160 / CIP 103997 / JCM 8858 / NBRC 14720 / NCIMB 2260 / Gabara) (Halobacterium pharaonis).